Reading from the N-terminus, the 440-residue chain is Suppressor of cytokine signaling 4 (440 aa).

Polar residues predominate over residues 1–10; sequence MAENNENISK. Positions 1–29 are disordered; it reads MAENNENISKNVDVRPKTSRSRSADRKDG. Residues 12–29 are compositionally biased toward basic and acidic residues; it reads VDVRPKTSRSRSADRKDG. Residues 286 to 381 form the SH2 domain; sequence CYWGVMDKYA…FFEPLLSTPL (96 aa). The SOCS box domain maps to 376–425; it reads LLSTPLIRTFPFSLQHICRTVICNCTTYDGIDALPIPSSMKLYLKEYHYK.

The protein operates within protein modification; protein ubiquitination. SOCS family proteins form part of a classical negative feedback system that regulates cytokine signal transduction. Substrate-recognition component of a SCF-like ECS (Elongin BC-CUL2/5-SOCS-box protein) E3 ubiquitin-protein ligase complex which mediates the ubiquitination and subsequent proteasomal degradation of target proteins. Inhibits EGF signaling by mediating the degradation of the Tyr-phosphorylated EGF receptor/EGFR. The sequence is that of Suppressor of cytokine signaling 4 (SOCS4) from Pongo abelii (Sumatran orangutan).